Consider the following 864-residue polypeptide: Ribosome biogenesis protein ERB1 (864 aa).

Residues 1–52 are compositionally biased toward basic and acidic residues; that stretch reads MAVDKGRRPVPPERRAQGRKRAEPGDVTIRETRTRPVHTPEPEPELLAKDGI. Disordered stretches follow at residues 1 to 153 and 191 to 231; these read MAVD…VKEG and ESRN…STED. Positions 53-71 are enriched in acidic residues; that stretch reads LELEDDDDNDDDDDDDDDD. Over residues 72 to 83 the composition is skewed to basic and acidic residues; the sequence is KSNHHDGAPKNE. The segment covering 100–135 has biased composition (acidic residues); it reads DDGDEDEEEDDEDEDEDASDDEAFDSDDLENWDEEA. WD repeat units lie at residues 509 to 549, 559 to 599, 694 to 732, 735 to 774, 778 to 817, and 833 to 864; these read AHAP…CVAT, ADRS…KTMY, NSAM…LVKT, PGVR…RPYK, YHSR…DLLQ, and QDAL…LWTP.

The protein belongs to the WD repeat BOP1/ERB1 family. In terms of assembly, component of the NOP7 complex, composed of ERB1, NOP7 and YTM1. The complex is held together by ERB1, which interacts with NOP7 via its N-terminal domain and with YTM1 via a high-affinity interaction between the seven-bladed beta-propeller domains of the 2 proteins. The NOP7 complex associates with the 66S pre-ribosome.

Its subcellular location is the nucleus. The protein resides in the nucleolus. It localises to the nucleoplasm. In terms of biological role, component of the NOP7 complex, which is required for maturation of the 25S and 5.8S ribosomal RNAs and formation of the 60S ribosome. This Malassezia globosa (strain ATCC MYA-4612 / CBS 7966) (Dandruff-associated fungus) protein is Ribosome biogenesis protein ERB1.